Consider the following 205-residue polypeptide: Putative lipoprotein LppC (205 aa).

A signal peptide spans 1 to 27 (MESPMTSTLHRTPLATAGLALVVALGG). Cys28 carries the N-palmitoyl cysteine lipid modification. A lipid anchor (S-diacylglycerol cysteine) is attached at Cys28. Positions 126 to 145 (GSTADGQTPAGGHSVPNSGG) are disordered.

The protein belongs to the UPF0098 family.

The protein resides in the cell membrane. This chain is Putative lipoprotein LppC (lppC), found in Mycobacterium tuberculosis (strain CDC 1551 / Oshkosh).